We begin with the raw amino-acid sequence, 488 residues long: Phenylalanine--tRNA ligase alpha subunit (488 aa).

L-phenylalanine is bound by residues Thr-315, 354-356, Phe-394, and Phe-419; that span reads QLD.

This sequence belongs to the class-II aminoacyl-tRNA synthetase family. Phe-tRNA synthetase alpha subunit type 2 subfamily. In terms of assembly, tetramer of two alpha and two beta subunits. The cofactor is Mg(2+).

The protein localises to the cytoplasm. It catalyses the reaction tRNA(Phe) + L-phenylalanine + ATP = L-phenylalanyl-tRNA(Phe) + AMP + diphosphate + H(+). This chain is Phenylalanine--tRNA ligase alpha subunit, found in Pyrobaculum calidifontis (strain DSM 21063 / JCM 11548 / VA1).